A 431-amino-acid polypeptide reads, in one-letter code: Gamma-glutamyl phosphate reductase (431 aa).

This sequence belongs to the gamma-glutamyl phosphate reductase family.

It is found in the cytoplasm. The catalysed reaction is L-glutamate 5-semialdehyde + phosphate + NADP(+) = L-glutamyl 5-phosphate + NADPH + H(+). It functions in the pathway amino-acid biosynthesis; L-proline biosynthesis; L-glutamate 5-semialdehyde from L-glutamate: step 2/2. Catalyzes the NADPH-dependent reduction of L-glutamate 5-phosphate into L-glutamate 5-semialdehyde and phosphate. The product spontaneously undergoes cyclization to form 1-pyrroline-5-carboxylate. The sequence is that of Gamma-glutamyl phosphate reductase from Beijerinckia indica subsp. indica (strain ATCC 9039 / DSM 1715 / NCIMB 8712).